Consider the following 1070-residue polypeptide: DNA-directed RNA polymerase subunit beta (1070 aa).

It belongs to the RNA polymerase beta chain family. In plastids the minimal PEP RNA polymerase catalytic core is composed of four subunits: alpha, beta, beta', and beta''. When a (nuclear-encoded) sigma factor is associated with the core the holoenzyme is formed, which can initiate transcription.

It localises to the plastid. It is found in the chloroplast. It carries out the reaction RNA(n) + a ribonucleoside 5'-triphosphate = RNA(n+1) + diphosphate. In terms of biological role, DNA-dependent RNA polymerase catalyzes the transcription of DNA into RNA using the four ribonucleoside triphosphates as substrates. The polypeptide is DNA-directed RNA polymerase subunit beta (Phaseolus vulgaris (Kidney bean)).